The following is a 515-amino-acid chain: Fatty acyl-CoA reductase 1 (515 aa).

Over 1-465 the chain is Cytoplasmic; the sequence is MVSIPEYYEG…ARKHLNKLRN (465 aa). Positions 451-507 are necessary and sufficient for PEX19-mediated localization into peroxisome membrane; the sequence is SGLPAARKHLNKLRNIRYGFNTILVILIWRIFIARSQMARNIWYFVVSLCYKFLSYF. A helical transmembrane segment spans residues 466 to 483; it reads IRYGFNTILVILIWRIFI. The Peroxisomal portion of the chain corresponds to 484-515; sequence ARSQMARNIWYFVVSLCYKFLSYFRASSTMRY.

It belongs to the fatty acyl-CoA reductase family. In terms of assembly, interacts with PEX19; PEX19 mediates the targeting of FAR1 to peroxisomes.

It localises to the peroxisome membrane. It carries out the reaction a long-chain fatty acyl-CoA + 2 NADPH + 2 H(+) = a long-chain primary fatty alcohol + 2 NADP(+) + CoA. The enzyme catalyses hexadecanoyl-CoA + 2 NADPH + 2 H(+) = hexadecan-1-ol + 2 NADP(+) + CoA. The catalysed reaction is octadecanoyl-CoA + 2 NADPH + 2 H(+) = octadecan-1-ol + 2 NADP(+) + CoA. It catalyses the reaction (9Z)-octadecenoyl-CoA + 2 NADPH + 2 H(+) = (9Z)-octadecen-1-ol + 2 NADP(+) + CoA. It carries out the reaction (9Z,12Z)-octadecadienoyl-CoA + 2 NADPH + 2 H(+) = (9Z,12Z)-octadecadien-1-ol + 2 NADP(+) + CoA. The enzyme catalyses eicosanoyl-CoA + 2 NADPH + 2 H(+) = eicosan-1-ol + 2 NADP(+) + CoA. The catalysed reaction is 16-methylheptadecanoyl-CoA + 2 NADPH + 2 H(+) = 16-methylheptadecan-1-ol + 2 NADP(+) + CoA. It catalyses the reaction 18-methylnonadecanoyl-CoA + 2 NADPH + 2 H(+) = 18-methylnonadecan-1-ol + 2 NADP(+) + CoA. In terms of biological role, catalyzes the reduction of saturated and unsaturated C16 or C18 fatty acyl-CoA to fatty alcohols. It plays an essential role in the production of ether lipids/plasmalogens which synthesis requires fatty alcohols. In parallel, it is also required for wax monoesters production since fatty alcohols also constitute a substrate for their synthesis. Catalyzes the reduction of saturated and unsaturated C16 or C18 fatty acyl-CoA to fatty alcohols. It plays an essential role in the production of ether lipids/plasmalogens which synthesis requires fatty alcohols. In parallel, it is also required for wax monoesters production since fatty alcohols also constitute a substrate for their synthesis. This is Fatty acyl-CoA reductase 1 from Rattus norvegicus (Rat).